We begin with the raw amino-acid sequence, 370 residues long: Cytochrome b (370 aa).

A run of 4 helical transmembrane segments spans residues 25-45 (FGSM…FLAV), 69-90 (WLMQ…YIHI), 105-125 (WLSG…GYVL), and 170-190 (FFAL…LHIL). Residues His-75 and His-89 each contribute to the heme b site. 2 residues coordinate heme b: His-174 and His-188. His-193 is an a ubiquinone binding site. 4 consecutive transmembrane segments (helical) span residues 218-238 (YKDL…VSFF), 280-300 (LGGA…PFTH), 312-332 (LMQL…WSST), and 339-358 (FTTI…ISKP).

Belongs to the cytochrome b family. As to quaternary structure, the cytochrome bc1 complex contains 3 respiratory subunits (MT-CYB, CYC1 and UQCRFS1), 2 core proteins (UQCRC1 and UQCRC2) and probably 6 low-molecular weight proteins. Requires heme b as cofactor.

The protein localises to the mitochondrion inner membrane. In terms of biological role, component of the ubiquinol-cytochrome c reductase complex (complex III or cytochrome b-c1 complex) that is part of the mitochondrial respiratory chain. The b-c1 complex mediates electron transfer from ubiquinol to cytochrome c. Contributes to the generation of a proton gradient across the mitochondrial membrane that is then used for ATP synthesis. The polypeptide is Cytochrome b (MT-CYB) (Chilabothrus subflavus (Jamaican yellow boa)).